The sequence spans 106 residues: Nucleoid-associated protein DIP0260 (106 aa).

It belongs to the YbaB/EbfC family. As to quaternary structure, homodimer.

The protein resides in the cytoplasm. It localises to the nucleoid. In terms of biological role, binds to DNA and alters its conformation. May be involved in regulation of gene expression, nucleoid organization and DNA protection. This chain is Nucleoid-associated protein DIP0260, found in Corynebacterium diphtheriae (strain ATCC 700971 / NCTC 13129 / Biotype gravis).